The chain runs to 334 residues: Putative heme-binding peroxidase (334 aa).

The active-site Proton acceptor is the His40. His169 is a binding site for heme b. The Tryptophan radical intermediate role is filled by Trp185.

The protein belongs to the peroxidase family. Cytochrome c peroxidase subfamily. Heme b serves as cofactor.

Functionally, destroys radicals which are normally produced within the cells and which are toxic to biological systems. The protein is Putative heme-binding peroxidase of Cryptococcus neoformans var. neoformans serotype D (strain JEC21 / ATCC MYA-565) (Filobasidiella neoformans).